The chain runs to 205 residues: Large ribosomal subunit protein bL21m (205 aa).

The N-terminal 39 residues, 1 to 39, are a transit peptide targeting the mitochondrion; it reads MAASSLTVTLGRLASACSHSILRPSGPGAASLWSASRRF.

Belongs to the bacterial ribosomal protein bL21 family. As to quaternary structure, component of the mitochondrial large ribosomal subunit (mt-LSU). Mature mammalian 55S mitochondrial ribosomes consist of a small (28S) and a large (39S) subunit. The 28S small subunit contains a 12S ribosomal RNA (12S mt-rRNA) and 30 different proteins. The 39S large subunit contains a 16S rRNA (16S mt-rRNA), a copy of mitochondrial valine transfer RNA (mt-tRNA(Val)), which plays an integral structural role, and 52 different proteins.

It is found in the mitochondrion. This Homo sapiens (Human) protein is Large ribosomal subunit protein bL21m (MRPL21).